A 517-amino-acid chain; its full sequence is Gamma-1-syntrophin (517 aa).

The region spanning 57–140 is the PDZ domain; sequence TVTIRRQTVG…EVTLTVSFLK (84 aa). One can recognise a PH domain in the interval 283–390; that stretch reads QIVYMGWCEA…WERAFQTATF (108 aa).

It belongs to the syntrophin family. As to quaternary structure, interacts with the dystrophin protein DMD and related proteins DTNA and DTNB. Interacts with DGKZ.

It localises to the cytoplasm. It is found in the cytoskeleton. Its subcellular location is the nucleus. Functionally, adapter protein that binds to and probably organizes the subcellular localization of a variety of proteins. May link various receptors to the actin cytoskeleton and the dystrophin glycoprotein complex. May participate in regulating the subcellular location of diacylglycerol kinase-zeta to ensure that diacylglycerol is rapidly inactivated following receptor activation. The chain is Gamma-1-syntrophin (Sntg1) from Mus musculus (Mouse).